The sequence spans 424 residues: L-glutamine:2-deoxy-scyllo-inosose aminotransferase (424 aa).

Lys-202 bears the N6-(pyridoxal phosphate)lysine mark.

This sequence belongs to the DegT/DnrJ/EryC1 family. L-glutamine:2-deoxy-scyllo-inosose/scyllo-inosose aminotransferase subfamily. Pyridoxal 5'-phosphate serves as cofactor.

The catalysed reaction is 2-deoxy-L-scyllo-inosose + L-glutamine = 2-deoxy-scyllo-inosamine + 2-oxoglutaramate. It carries out the reaction 3-amino-2,3-dideoxy-scyllo-inosose + L-glutamine = 2-deoxystreptamine + 2-oxoglutaramate. Its pathway is metabolic intermediate biosynthesis; 2-deoxystreptamine biosynthesis; 2-deoxystreptamine from D-glucose 6-phosphate: step 2/4. It participates in metabolic intermediate biosynthesis; 2-deoxystreptamine biosynthesis; 2-deoxystreptamine from D-glucose 6-phosphate: step 4/4. The protein operates within antibiotic biosynthesis; ribostamycin biosynthesis. Functionally, catalyzes the PLP-dependent transamination of 2-deoxy-scyllo-inosose (2-DOI) to form 2-deoxy-scyllo-inosamine (2-DOIA) using L-glutamine as the amino donor. Also catalyzes the transamination of 3-amino-2,3-dideoxy-scyllo-inosose (keto-2-DOIA) into 2-deoxystreptamine (2-DOS). In Streptomyces ribosidificus, this protein is L-glutamine:2-deoxy-scyllo-inosose aminotransferase (rbmB).